Here is a 296-residue protein sequence, read N- to C-terminus: Ribosomal RNA small subunit methyltransferase A (296 aa).

Over residues 1-11 the composition is skewed to basic and acidic residues; that stretch reads MERSHVGRDCG. Positions 1-24 are disordered; it reads MERSHVGRDCGSRSSPRAFSVPTS. The span at 12-24 shows a compositional bias: polar residues; it reads SRSSPRAFSVPTS. S-adenosyl-L-methionine contacts are provided by Asn43, Leu45, Gly70, Glu91, Asp113, and Asn135.

Belongs to the class I-like SAM-binding methyltransferase superfamily. rRNA adenine N(6)-methyltransferase family. RsmA subfamily.

The protein localises to the cytoplasm. The enzyme catalyses adenosine(1518)/adenosine(1519) in 16S rRNA + 4 S-adenosyl-L-methionine = N(6)-dimethyladenosine(1518)/N(6)-dimethyladenosine(1519) in 16S rRNA + 4 S-adenosyl-L-homocysteine + 4 H(+). In terms of biological role, specifically dimethylates two adjacent adenosines (A1518 and A1519) in the loop of a conserved hairpin near the 3'-end of 16S rRNA in the 30S particle. May play a critical role in biogenesis of 30S subunits. This Salinibacter ruber (strain DSM 13855 / M31) protein is Ribosomal RNA small subunit methyltransferase A.